A 106-amino-acid chain; its full sequence is Biogenesis of lysosome-related organelles complex 1 subunit 6 (106 aa).

Positions 78-106 (KKTSQLELSDTNIEDGSTTSTPTTTNKSQ) are disordered. Over residues 82 to 93 (QLELSDTNIEDG) the composition is skewed to polar residues. Residues 94-106 (STTSTPTTTNKSQ) show a composition bias toward low complexity.

The protein belongs to the BLOC1S6 family. As to quaternary structure, homodimer (isoform 1). Component of the biogenesis of lysosome-related organelles complex-1 (BLOC-1) composed at least of blos-1, blos-2, blos-4, dsbn-1, glo-2, mutd-1 and snpn-1. Isoform 1 interacts with blos-1 and blos-4.

It localises to the cytoplasm. The protein localises to the endosome. Its function is as follows. Component of the biogenesis of lysosome-related organelles complex-1 (BLOC-1) involved in gut granule biogenesis. The protein is Biogenesis of lysosome-related organelles complex 1 subunit 6 (glo-2) of Caenorhabditis elegans.